A 334-amino-acid chain; its full sequence is MNIGIVNDLPLAVEAMRRAIARRPEHRVLWVATDGPQAVELCAAQPPDIVLMDLIMPKFDGIEATRRIMRPERPCAILIVTSCIGANAWRVFEAMGAGALDAVDTPRLGDGAAGDTTKLLLAKIDQIGRLLDAPGSSRLAGAAARGGAGPLIAIGASAGGPGALASILGNLPADFNAPIVIVQHVDRAFAEGMAQWLDGQTRLAVRVAREGDRPQPGVALLAATDDHLRITRAGTLEYTREPAATPYRPSVDVFFNSLTEHWPGRVIGVLLTGMGRDGAIGLKALRMKGYHTIAQDEATSAVYGMPKAAATLGAARAILPLGRIAGELAALARI.

A Response regulatory domain is found at 2 to 120 (NIGIVNDLPL…GAAGDTTKLL (119 aa)). Residue aspartate 53 is modified to 4-aspartylphosphate. Positions 134-334 (PGSSRLAGAA…AGELAALARI (201 aa)) constitute a CheB-type methylesterase domain. Catalysis depends on residues serine 157, histidine 184, and aspartate 277.

The protein belongs to the CheB family. Phosphorylated by CheA. Phosphorylation of the N-terminal regulatory domain activates the methylesterase activity.

The protein localises to the cytoplasm. It catalyses the reaction [protein]-L-glutamate 5-O-methyl ester + H2O = L-glutamyl-[protein] + methanol + H(+). The catalysed reaction is L-glutaminyl-[protein] + H2O = L-glutamyl-[protein] + NH4(+). Its function is as follows. Involved in chemotaxis. Part of a chemotaxis signal transduction system that modulates chemotaxis in response to various stimuli. Catalyzes the demethylation of specific methylglutamate residues introduced into the chemoreceptors (methyl-accepting chemotaxis proteins or MCP) by CheR. Also mediates the irreversible deamidation of specific glutamine residues to glutamic acid. This is Protein-glutamate methylesterase/protein-glutamine glutaminase 2 from Burkholderia orbicola (strain AU 1054).